Reading from the N-terminus, the 529-residue chain is Peptide chain release factor 3 (529 aa).

The tr-type G domain occupies 11 to 280 (ARRRTFAIIS…GLVEWAPSPM (270 aa)). GTP is bound by residues 20 to 27 (SHPDAGKT), 88 to 92 (DTPGH), and 142 to 145 (NKLD).

It belongs to the TRAFAC class translation factor GTPase superfamily. Classic translation factor GTPase family. PrfC subfamily.

Its subcellular location is the cytoplasm. Its function is as follows. Increases the formation of ribosomal termination complexes and stimulates activities of RF-1 and RF-2. It binds guanine nucleotides and has strong preference for UGA stop codons. It may interact directly with the ribosome. The stimulation of RF-1 and RF-2 is significantly reduced by GTP and GDP, but not by GMP. This chain is Peptide chain release factor 3, found in Erwinia tasmaniensis (strain DSM 17950 / CFBP 7177 / CIP 109463 / NCPPB 4357 / Et1/99).